Reading from the N-terminus, the 143-residue chain is Putative complexin-1 (143 aa).

Residues 16–72 (EVTGGLGMKDDGGEKTETGEDPEVIAARLEQEERRKEKHRKMENEREKMRQGIRDKY) form a disordered region. Composition is skewed to basic and acidic residues over residues 23 to 33 (MKDDGGEKTET) and 44 to 72 (LEQE…RDKY). The stretch at 40–71 (IAARLEQEERRKEKHRKMENEREKMRQGIRDK) forms a coiled coil.

This sequence belongs to the complexin/synaphin family.

The protein localises to the cytoplasm. The protein resides in the cytosol. Its function is as follows. Positively regulates a late step in synaptic vesicle exocytosis. The polypeptide is Putative complexin-1 (cpx-1) (Caenorhabditis elegans).